The primary structure comprises 807 residues: MESVEKKDSLTAPSEFATTASTDAANAPTTFPVEAPPLEEEEVIIEQDPGFVSEDDEDRSVPTEDKKQDQDNAEANEEQVGRGDERHGDYLDVGDDVLLKHLQRQCAIICDALQERSDVPLAIADVSLAYERHLFSPRVPPKRQENGTCEPNPRLNFYPVFAVPEVLATYHIFFQNCKIPLSCRANRSRADKQLALRQGAVIPDIASLNEVPKIFEGLGRDEKRAANALQQENSENESHSGVLVELEGDNARLAVLKRSIEVTHFAYPALNLPPKVMSTVMSELIVRRAQPLERDANLQEQTEEGLPAVGDEQLARWLQTREPADLEERRKLMMAAVLVTVELECMQRFFADPEMQRKLEETLHYTFRQGYVRQACKISNVELCNLVSYLGILHENRLGQNVLHSTLKGEARRDYVRDCVYLFLCYTWQTAMGVWQQCLEECNLKELQKLLKQNLKDLWTAFNERSVAAHLADIIFPERLLKTLQQGLPDFTSQSMLQNFRNFILERSGILPATCCALPSDFVPIKYRECPPPLWGHCYLLQLANYLAYHSDIMEDVSGDGLLECHCRCNLCTPHRSLVCNSQLLNESQIIGTFELQGPSPDEKSAAPGLKLTPGLWTSAYLRKFVPEDYHAHEIRFYEDQSRPPNAELTACVITQGHILGQLQAINKARQEFLLRKGRGVYLDPQSGEELNPIPPPPQPYQQQPRALASQDGTQKEAAAAAATHGRGGILGQSGRGGFGRGGGGHDGRLGEPRRGSFRGRRGVRRNTVTLGRIPLAGAPEIGNRFQHGYNLRSSGAAGTARSPTQP.

Residues 1–88 are disordered; that stretch reads MESVEKKDSL…QVGRGDERHG (88 aa). Residues 16 to 29 show a composition bias toward polar residues; that stretch reads FATTASTDAANAPT. Composition is skewed to basic and acidic residues over residues 59 to 70 and 79 to 88; these read RSVPTEDKKQDQ and QVGRGDERHG. Residues 280–345 are binding to host EIF4G; that stretch reads VMSELIVRRA…AVLVTVELEC (66 aa). An RRM domain is found at 348–466; the sequence is RFFADPEMQR…DLWTAFNERS (119 aa). Phosphotyrosine; by host occurs at positions 365 and 682. The tract at residues 684 to 807 is disordered; it reads DPQSGEELNP…AGTARSPTQP (124 aa). Gly residues predominate over residues 726–743; the sequence is GRGGILGQSGRGGFGRGG. A compositionally biased stretch (basic and acidic residues) spans 744–755; that stretch reads GGHDGRLGEPRR. The span at 756–765 shows a compositional bias: basic residues; the sequence is GSFRGRRGVR.

This sequence belongs to the adenoviridae shutoff protein family. Monomer. Interacts with hexon protein; this interaction allows chaperoning and trimerization of hexon proteins. Interacts (via N-terminus) with host initiation factor EIF4G (via C-terminus). Interacts (via RRM domain) with viral mRNAs that contain the tripartite leader; this interaction allows ribosome shunting and expression of viral late mRNAs. Might be cleaved by the viral protease. Post-translationally, phosphorylated. Tyrosine phosphorylation enhances preferential binding to tripartite leader mRNAs and allows ribosome shunting. In terms of processing, methylated. Asymmetric dimethylation by host PRMT1 of the Arg/Gly-rich region may regulate shutoff protein binding to hexon and promote the capsid assembly in the nucleus.

The protein localises to the host cytoplasm. In terms of biological role, protein that inhibits host translation while promoting late viral translation by ribosome shunting. Blocks host cap-dependent translation by binding to eIF4G, displacing MKNK1 from cap initiation complexes and preventing EIF4E phosphorylation. Binds to the tripartite leader sequence of viral late mRNAs and recruits host eIF4G, PABPC1/poly-A binding protein and 40S ribosomes subunits on viral mRNAs, allowing ribosome shunting and efficient translation of late viral mRNAs even though conventional translation via ribosome scanning from the cap has been shut off in the host cell. During assembly, acts as a chaperone protein that helps hexon proteins assembly into trimers. This chain is Shutoff protein, found in Homo sapiens (Human).